Consider the following 270-residue polypeptide: Pyrroline-5-carboxylate reductase (270 aa).

It belongs to the pyrroline-5-carboxylate reductase family.

It localises to the cytoplasm. It carries out the reaction L-proline + NADP(+) = (S)-1-pyrroline-5-carboxylate + NADPH + 2 H(+). It catalyses the reaction L-proline + NAD(+) = (S)-1-pyrroline-5-carboxylate + NADH + 2 H(+). Its pathway is amino-acid biosynthesis; L-proline biosynthesis; L-proline from L-glutamate 5-semialdehyde: step 1/1. Catalyzes the reduction of 1-pyrroline-5-carboxylate (PCA) to L-proline. This chain is Pyrroline-5-carboxylate reductase, found in Methanosarcina acetivorans (strain ATCC 35395 / DSM 2834 / JCM 12185 / C2A).